Here is a 503-residue protein sequence, read N- to C-terminus: ATP synthase subunit alpha (503 aa).

170-177 (GDRQTGKT) contacts ATP.

This sequence belongs to the ATPase alpha/beta chains family. F-type ATPases have 2 components, CF(1) - the catalytic core - and CF(0) - the membrane proton channel. CF(1) has five subunits: alpha(3), beta(3), gamma(1), delta(1), epsilon(1). CF(0) has three main subunits: a(1), b(2) and c(9-12). The alpha and beta chains form an alternating ring which encloses part of the gamma chain. CF(1) is attached to CF(0) by a central stalk formed by the gamma and epsilon chains, while a peripheral stalk is formed by the delta and b chains.

Its subcellular location is the cell inner membrane. The catalysed reaction is ATP + H2O + 4 H(+)(in) = ADP + phosphate + 5 H(+)(out). Its function is as follows. Produces ATP from ADP in the presence of a proton gradient across the membrane. The alpha chain is a regulatory subunit. The protein is ATP synthase subunit alpha of Geobacter metallireducens (strain ATCC 53774 / DSM 7210 / GS-15).